Consider the following 200-residue polypeptide: UPF0488 protein CG14286 (200 aa).

Disordered stretches follow at residues 1–28 (MHKR…PVAE) and 139–174 (KDFR…AEAG).

It belongs to the UPF0488 family.

This Drosophila melanogaster (Fruit fly) protein is UPF0488 protein CG14286.